The following is a 711-amino-acid chain: MSDYSTGGPPPGPPPPAGGGGGAGGAGGGPPPGPPGAGDRGGGGPGGGGPGGGSAGGPSQPPGGGGPGIRKDAFADAVQRARQIAAKIGGDAATTVNNSTPDFGFGGQKRQLEDGDQPESKKLASQGDSISSQLGPIHPPPRTSMTEEYRVPDGMVGLIIGRGGEQINKIQQDSGCKVQISPDSGGLPERSVSLTGAPESVQKAKMMLDDIVSRGRGGPPGQFHDNANGGQNGTVQEIMIPAGKAGLVIGKGGETIKQLQERAGVKMILIQDGSQNTNVDKPLRIIGDPYKVQQACEMVMDILRERDQGGFGDRNEYGSRIGGGIDVPVPRHSVGVVIGRSGEMIKKIQNDAGVRIQFKQDDGTGPEKIAHIMGPPDRCEHAARIINDLLQSLRSGPPGPPGGPGMPPGGRGRGRGQGNWGPPGGEMTFSIPTHKCGLVIGRGGENVKAINQQTGAFVEISRQLPPNGDPNFKLFIIRGSPQQIDHAKQLIEEKIEGPLCPVGPGPGGPGPAGPMGPFNPGPFNQGPPGAPPHAGGPPPHQYPPQGWGNTYPQWQPPAPHDPSKAAAAAADPNAAWAAYYSHYYQQPPGPVPGPAPAPAAPPAQGEPPQPPPTGQSDYTKAWEEYYKKIGQQPQQPGAPPQQDYTKAWEEYYKKQAQVATGGGPGAPPGSQPDYSAAWAEYYRQQAAYYGQTPGPGGPQPPPTQQGQQQAQ.

The tract at residues 1–147 (MSDYSTGGPP…HPPPRTSMTE (147 aa)) is disordered. N-acetylserine is present on S2. Positions 8–17 (GPPPGPPPPA) are enriched in pro residues. Gly residues-rich tracts occupy residues 18 to 28 (GGGGGAGGAGG) and 36 to 68 (GAGD…GGPG). R40 bears the Omega-N-methylarginine mark. At K87 the chain carries N6-acetyllysine. S99 carries the phosphoserine modification. At T100 the chain carries Phosphothreonine. Positions 110–122 (RQLEDGDQPESKK) are enriched in basic and acidic residues. Residue K121 forms a Glycyl lysine isopeptide (Lys-Gly) (interchain with G-Cter in SUMO1); alternate linkage. Residue K121 forms a Glycyl lysine isopeptide (Lys-Gly) (interchain with G-Cter in SUMO2); alternate linkage. Residues S125, S129, S131, S181, S184, S193, and S274 each carry the phosphoserine modification. KH domains are found at residues 144–208 (SMTE…KMML), 233–299 (GTVQ…CEMV), and 322–386 (GGGI…ARII). A disordered region spans residues 392 to 429 (SLRSGPPGPPGGPGMPPGGRGRGRGQGNWGPPGGEMTF). Positions 397 to 407 (PPGPPGGPGMP) are enriched in pro residues. Over residues 408–424 (PGGRGRGRGQGNWGPPG) the composition is skewed to gly residues. Omega-N-methylarginine is present on residues R411, R413, R415, and R442. Residues 424–491 (GGEMTFSIPT…QQIDHAKQLI (68 aa)) enclose the KH 4 domain. The residue at position 480 (S480) is a Phosphoserine. The interval 497-569 (GPLCPVGPGP…HDPSKAAAAA (73 aa)) is disordered. Pro residues-rich tracts occupy residues 501-520 (PVGP…PFNP) and 528-542 (PGAP…PHQY). Copy 1 of the repeat occupies 571–582 (DPNAAWAAYYSH). The segment at 571-684 (DPNAAWAAYY…SAAWAEYYRQ (114 aa)) is 4 X 12 AA imperfect repeats. The disordered stretch occupies residues 583–711 (YYQQPPGPVP…PTQQGQQQAQ (129 aa)). A compositionally biased stretch (pro residues) spans 587–613 (PPGPVPGPAPAPAAPPAQGEPPQPPPT). 3 consecutive repeat copies span residues 617 to 628 (DYTKAWEEYYKK), 643 to 654 (DYTKAWEEYYKK), and 673 to 684 (DYSAAWAEYYRQ).

It belongs to the KHSRP family. As to quaternary structure, part of a ternary complex containing FUBP2, PTBP1, PTBP2 and HNRPH1. Interacts with PARN. Interacts with PQBP1. Post-translationally, phosphorylation at Ser-193 leads to the unfolding of the unstable KH domain 1, creating a site for 14-3-3 YWHAZ binding, which promotes nuclear localization and impairs the RNA degradation function. As to expression, detected in neural and non-neural cell lines.

It localises to the nucleus. It is found in the cytoplasm. In terms of biological role, binds to the dendritic targeting element and may play a role in mRNA trafficking. Part of a ternary complex that binds to the downstream control sequence (DCS) of the pre-mRNA. Mediates exon inclusion in transcripts that are subject to tissue-specific alternative splicing. May interact with single-stranded DNA from the far-upstream element (FUSE). May activate gene expression. Also involved in degradation of inherently unstable mRNAs that contain AU-rich elements (AREs) in their 3'-UTR, possibly by recruiting degradation machinery to ARE-containing mRNAs. In Homo sapiens (Human), this protein is Far upstream element-binding protein 2 (KHSRP).